Reading from the N-terminus, the 64-residue chain is Photosystem II reaction center protein J (64 aa).

A helical membrane pass occupies residues 35 to 55; it reads LWLVATAGGIAVIFVLGIFFY.

It belongs to the PsbJ family. In terms of assembly, PSII is composed of 1 copy each of membrane proteins PsbA, PsbB, PsbC, PsbD, PsbE, PsbF, PsbH, PsbI, PsbJ, PsbK, PsbL, PsbM, PsbT, PsbX, PsbY, Psb30/Ycf12, peripheral proteins PsbO, CyanoQ (PsbQ), PsbU, PsbV and a large number of cofactors. It forms dimeric complexes.

The protein localises to the cellular thylakoid membrane. Its function is as follows. One of the components of the core complex of photosystem II (PSII). PSII is a light-driven water:plastoquinone oxidoreductase that uses light energy to abstract electrons from H(2)O, generating O(2) and a proton gradient subsequently used for ATP formation. It consists of a core antenna complex that captures photons, and an electron transfer chain that converts photonic excitation into a charge separation. This is Photosystem II reaction center protein J from Prochlorococcus marinus (strain MIT 9515).